Reading from the N-terminus, the 177-residue chain is Small ribosomal subunit protein uS13 (177 aa).

The segment covering 132–145 (GVRHKRGQKVRGQR) has biased composition (basic residues). A disordered region spans residues 132 to 177 (GVRHKRGQKVRGQRTKSTGRTEGTIGVNVEAIKEEQAEDAAAEDDE). Acidic residues predominate over residues 167 to 177 (QAEDAAAEDDE).

Belongs to the universal ribosomal protein uS13 family. Part of the 30S ribosomal subunit. Forms a loose heterodimer with protein S19. Forms two bridges to the 50S subunit in the 70S ribosome.

Functionally, located at the top of the head of the 30S subunit, it contacts several helices of the 16S rRNA. In the 70S ribosome it contacts the 23S rRNA (bridge B1a) and protein L5 of the 50S subunit (bridge B1b), connecting the 2 subunits; these bridges are implicated in subunit movement. This chain is Small ribosomal subunit protein uS13, found in Haloarcula marismortui (strain ATCC 43049 / DSM 3752 / JCM 8966 / VKM B-1809) (Halobacterium marismortui).